The sequence spans 444 residues: uncharacterized protein (444 aa).

Residues 164–381 form the Radical SAM core domain; the sequence is GAYGKSFLLE…EKALKKEGIR (218 aa). [4Fe-4S] cluster contacts are provided by Cys-178, Cys-182, and Cys-185.

[4Fe-4S] cluster is required as a cofactor.

This is an uncharacterized protein from Methanocaldococcus jannaschii (strain ATCC 43067 / DSM 2661 / JAL-1 / JCM 10045 / NBRC 100440) (Methanococcus jannaschii).